Consider the following 430-residue polypeptide: ATP-dependent RNA helicase RhlB (430 aa).

The Q motif motif lies at Gln-9–Ala-37. The Helicase ATP-binding domain maps to Leu-40–Val-219. Residue Ala-53–Thr-60 participates in ATP binding. A DEAD box motif is present at residues Asp-165–Asp-168. Positions Arg-245–Met-390 constitute a Helicase C-terminal domain. Residues Ala-388 to Gly-430 are disordered. Positions Asn-402–Ser-423 are enriched in low complexity.

This sequence belongs to the DEAD box helicase family. RhlB subfamily. Component of the RNA degradosome, which is a multiprotein complex involved in RNA processing and mRNA degradation.

It is found in the cytoplasm. It carries out the reaction ATP + H2O = ADP + phosphate + H(+). Its function is as follows. DEAD-box RNA helicase involved in RNA degradation. Has RNA-dependent ATPase activity and unwinds double-stranded RNA. This chain is ATP-dependent RNA helicase RhlB, found in Erwinia tasmaniensis (strain DSM 17950 / CFBP 7177 / CIP 109463 / NCPPB 4357 / Et1/99).